Here is a 510-residue protein sequence, read N- to C-terminus: Light-independent protochlorophyllide reductase subunit B (510 aa).

Position 36 (aspartate 36) interacts with [4Fe-4S] cluster. The active-site Proton donor is aspartate 296. 431-432 (GM) contributes to the substrate binding site.

Belongs to the ChlB/BchB/BchZ family. Protochlorophyllide reductase is composed of three subunits; ChlL, ChlN and ChlB. Forms a heterotetramer of two ChlB and two ChlN subunits. [4Fe-4S] cluster is required as a cofactor.

The protein resides in the plastid. It localises to the chloroplast. The catalysed reaction is chlorophyllide a + oxidized 2[4Fe-4S]-[ferredoxin] + 2 ADP + 2 phosphate = protochlorophyllide a + reduced 2[4Fe-4S]-[ferredoxin] + 2 ATP + 2 H2O. It participates in porphyrin-containing compound metabolism; chlorophyll biosynthesis (light-independent). In terms of biological role, component of the dark-operative protochlorophyllide reductase (DPOR) that uses Mg-ATP and reduced ferredoxin to reduce ring D of protochlorophyllide (Pchlide) to form chlorophyllide a (Chlide). This reaction is light-independent. The NB-protein (ChlN-ChlB) is the catalytic component of the complex. The sequence is that of Light-independent protochlorophyllide reductase subunit B from Auxenochlorella protothecoides (Green microalga).